Reading from the N-terminus, the 205-residue chain is GTP cyclohydrolase-2 (205 aa).

49–53 (RIHSE) is a binding site for GTP. Zn(2+) contacts are provided by C54, C65, and C67. GTP contacts are provided by residues Q70, 92–94 (EGR), and T114. Catalysis depends on D126, which acts as the Proton acceptor. R128 functions as the Nucleophile in the catalytic mechanism. Residues T149 and K154 each contribute to the GTP site.

It belongs to the GTP cyclohydrolase II family. Zn(2+) serves as cofactor.

It carries out the reaction GTP + 4 H2O = 2,5-diamino-6-hydroxy-4-(5-phosphoribosylamino)-pyrimidine + formate + 2 phosphate + 3 H(+). Its pathway is cofactor biosynthesis; riboflavin biosynthesis; 5-amino-6-(D-ribitylamino)uracil from GTP: step 1/4. Its function is as follows. Catalyzes the conversion of GTP to 2,5-diamino-6-ribosylamino-4(3H)-pyrimidinone 5'-phosphate (DARP), formate and pyrophosphate. The polypeptide is GTP cyclohydrolase-2 (Shewanella sediminis (strain HAW-EB3)).